Reading from the N-terminus, the 951-residue chain is MRSLKLAEGCKGTQVYALNPSAPTPPPPPGNSSTGGGGGGGSGGGTGGVGDKLLQHLSDHLRVNSVRSKSSRTYPPPTQPNAVVSPEFLLPCGLPVTDLLEPQIDPCLKFVDLVEKMAQVYRRIENCSQFEKSGAYLEQCAIFRGISDPKLFRRSLRSSRQHAVDVHAKVVLASWLRFERREDELIGTTSMDCCGRNLECPKATLVSGYDPESVYDPCVCSGASRSEMMNEDECSTSQEVDYDMSFCIGDEEVRCVRYKIASLSRPFKAMLYGGFREMKRATINFTQNGISVEGMRAAEIFSRTNRLDNFPPNVVLELLKLANRFCCDELKSACDSHLAHLVNSLDEAMLLIEYGLEEAAYLLVAACLQVFLRELPSSMHNPNVIKIFCSAEGRERLASLGHASFTLYFFLSQIAMEDDMKSNTTVMLLERLVECAVDSWEKQLAYHQLGVVMLERKEYKDAQRWFNAAVEAGHLYSLVGVARTKFKRDHRYSAYKIINSLISDHKATGWMHQERSLYCSGKEKLLDLDTATEFDPTLTFPYKFRAVALVEENQFGAAIAELNKILGFKASPDCLEMRAWISIGMEDYEGALKDIRALLTLEPNFMMFNWKIHGDHMVELLRPLAQQWSQADCWMQLYDRWSSVDDIGSLAVVHHMLANDPGKSLLRFRQSLLLLRLNCQKAAMRSLRLARNHSKSEHERLVYEGWILYDTGHREEALAKAEESISIQRSFEAFFLKAYALADSTLDPDSSNYVIQLLQEALKCPSDGLRKGQALNNLGSVYVDCEKLDLAADCYTNALTIKHTRAHQGLARVYHLKNQRKAAYDEMTKLIEKAQNNASAYEKRSEYCDREMAQSDLCLATQLDPLRTYPYRYRAAVLMDDHKESEAIDELSRAISFKPDLQLLHLRAAFYDSMGEGASAIKDCEAALCIDPGHADTLELYHKAREPNDQK.

Residues 15 to 52 (VYALNPSAPTPPPPPGNSSTGGGGGGGSGGGTGGVGDK) form a disordered region. Over residues 33–50 (STGGGGGGGSGGGTGGVG) the composition is skewed to gly residues. The BTB domain maps to 242–342 (YDMSFCIGDE…ACDSHLAHLV (101 aa)). TPR repeat units follow at residues 443-476 (QLAY…GHLY), 539-572 (TFPY…KASP), 573-605 (DCLE…EPNF), 698-731 (HERL…QRSF), 772-805 (GQAL…KHTR), 807-837 (HQGL…AQNN), 868-901 (TYPY…KPDL), and 903-934 (LLHL…DPGH). A coiled-coil region spans residues 815-854 (HLKNQRKAAYDEMTKLIEKAQNNASAYEKRSEYCDREMAQ).

Belongs to the ETO1 family. Interacts with the C-terminal domain of ACS4, ACS5 and ACS9. Interacts with CUL3A. Putative component of a ubiquitin ligase complex containing CUL3. Predominantly expressed in flowers.

It functions in the pathway protein modification; protein ubiquitination. In terms of biological role, essential regulator of the ethylene pathway, which acts by regulating the stability of 1-aminocyclopropane-1-carboxylate synthase (ACS) enzymes. May act as a substrate-specific adapter that connects ACS enzymes, such as ACS5, to ubiquitin ligase complexes, leading to proteasomal degradation of ACS enzymes. The protein is Ethylene-overproduction protein 1 (ETO1) of Arabidopsis thaliana (Mouse-ear cress).